The sequence spans 417 residues: Tyrosine--tRNA ligase (417 aa).

Y34 is a binding site for L-tyrosine. Residues 39-48 (PSGDSLHIGH) carry the 'HIGH' region motif. Positions 165 and 169 each coordinate L-tyrosine. A 'KMSKS' region motif is present at residues 227–231 (KFGKT). ATP is bound at residue K230. The S4 RNA-binding domain maps to 349–415 (ANIVDWLVDT…GKKNYTLAKV (67 aa)).

The protein belongs to the class-I aminoacyl-tRNA synthetase family. TyrS type 1 subfamily. As to quaternary structure, homodimer.

Its subcellular location is the cytoplasm. It catalyses the reaction tRNA(Tyr) + L-tyrosine + ATP = L-tyrosyl-tRNA(Tyr) + AMP + diphosphate + H(+). Catalyzes the attachment of tyrosine to tRNA(Tyr) in a two-step reaction: tyrosine is first activated by ATP to form Tyr-AMP and then transferred to the acceptor end of tRNA(Tyr). This Limosilactobacillus fermentum (strain NBRC 3956 / LMG 18251) (Lactobacillus fermentum) protein is Tyrosine--tRNA ligase.